The chain runs to 427 residues: MAEQDVENELLDYDEDEEPQAPQESTPAPPKKDVKGSYVSIHSSGFRDFLLKPELLRAIVDCGFEHPSEVQHECIPQAILGMDVLCQAKSGMGKTAVFVLATLQQIEPVNGQVSVLVMCHTRELAFQISKEYERFSKYMPSVKVSVFFGGLSIKKDEDVLKKNCPHVVVGTPGRILALVRSRSLNLRNVKHFVLDECDKMLEQLDMRRDVQEIFRLTPHEKQCMMFSATLSKEIRPVCRKFMQDPMEVFVDDETKLTLHGLQQYYVKLKDSEKNRKLFDLLDVLEFNQVVIFVKSVQRCMALAQLLVEQNFPAIAIHRGMAQEERLSRYQQFKDFQRRILVATNLFGRGMDIERVNIVFNYDMPEDSDTYLHRVARAGRFGTKGLAVTFVSDENDAKILNDVQDRFEVNVAELPEEIDISTYIEQSR.

Over residues 1 to 19 (MAEQDVENELLDYDEDEEP) the composition is skewed to acidic residues. Residues 1-36 (MAEQDVENELLDYDEDEEPQAPQESTPAPPKKDVKG) are disordered. N-acetylalanine is present on alanine 2. Lysine 31 participates in a covalent cross-link: Glycyl lysine isopeptide (Lys-Gly) (interchain with G-Cter in SUMO2). At lysine 35 the chain carries N6-acetyllysine; alternate. Residue lysine 35 forms a Glycyl lysine isopeptide (Lys-Gly) (interchain with G-Cter in SUMO2); alternate linkage. Serine 37 bears the Phosphoserine mark. The Q motif motif lies at 44–72 (SGFRDFLLKPELLRAIVDCGFEHPSEVQH). One can recognise a Helicase ATP-binding domain in the interval 75 to 248 (IPQAILGMDV…RKFMQDPMEV (174 aa)). 88–95 (AKSGMGKT) contributes to the ATP binding site. Residues lysine 154 and lysine 162 each participate in a glycyl lysine isopeptide (Lys-Gly) (interchain with G-Cter in SUMO2) cross-link. Phosphothreonine is present on threonine 171. The short motif at 195–198 (DECD) is the DECD box element. Glycyl lysine isopeptide (Lys-Gly) (interchain with G-Cter in SUMO2) cross-links involve residues lysine 240 and lysine 255. The Helicase C-terminal domain maps to 260–421 (GLQQYYVKLK…ELPEEIDIST (162 aa)). A Phosphoserine modification is found at serine 426.

Belongs to the DEAD box helicase family. DECD subfamily. Binds ALYREF/THOC4 and DDX39B/BAT1. Interacts with the apo-AREX complex component SARNP. Interacts with MX1. Interacts with MCM3AP isoform GANP. Interacts with ECD. Interacts with PHAX; this interaction stimulates PHAX RNA binding activity. SUMOylated by RANBP2; SUMOylation modification affects its ability to bind RNA.

It is found in the nucleus. Its subcellular location is the cytoplasm. The catalysed reaction is ATP + H2O = ADP + phosphate + H(+). Its function is as follows. Helicase that plays an essential role in mRNA export and is involved in multiple steps in RNA metabolism including alternative splicing. Regulates nuclear mRNA export to the cytoplasm through association with ECD. Also involved in spliceosomal uridine-rich small nuclear RNA (U snRNA) export by stimulating the RNA binding of adapter PHAX. Plays a role in the negative regulation of type I IFN production by increasing the nuclear retention of antiviral transcripts and thus reducing their protein expression. Independently of the interferon pathway, plays an antiviral role against alphaviruses by binding to a 5' conserved sequence element in the viral genomic RNA. The polypeptide is ATP-dependent RNA helicase DDX39A (Mus musculus (Mouse)).